We begin with the raw amino-acid sequence, 91 residues long: Small ribosomal subunit protein uS19 (91 aa).

This sequence belongs to the universal ribosomal protein uS19 family.

In terms of biological role, protein S19 forms a complex with S13 that binds strongly to the 16S ribosomal RNA. The chain is Small ribosomal subunit protein uS19 from Pseudoalteromonas atlantica (strain T6c / ATCC BAA-1087).